A 505-amino-acid chain; its full sequence is Deoxyguanosinetriphosphate triphosphohydrolase (505 aa).

Positions 66–273 (RLTHSMEVQQ…MEAADDISYC (208 aa)) constitute an HD domain.

Belongs to the dGTPase family. Type 1 subfamily. In terms of assembly, homotetramer. Requires Mg(2+) as cofactor.

The catalysed reaction is dGTP + H2O = 2'-deoxyguanosine + triphosphate + H(+). Functionally, dGTPase preferentially hydrolyzes dGTP over the other canonical NTPs. In Salmonella paratyphi A (strain AKU_12601), this protein is Deoxyguanosinetriphosphate triphosphohydrolase.